We begin with the raw amino-acid sequence, 297 residues long: Acetylglutamate kinase (297 aa).

Residues 72 to 73, Arg-94, and Asn-187 each bind substrate; that span reads GG.

The protein belongs to the acetylglutamate kinase family. ArgB subfamily.

Its subcellular location is the cytoplasm. It catalyses the reaction N-acetyl-L-glutamate + ATP = N-acetyl-L-glutamyl 5-phosphate + ADP. It functions in the pathway amino-acid biosynthesis; L-arginine biosynthesis; N(2)-acetyl-L-ornithine from L-glutamate: step 2/4. Its function is as follows. Catalyzes the ATP-dependent phosphorylation of N-acetyl-L-glutamate. This chain is Acetylglutamate kinase, found in Synechocystis sp. (strain ATCC 27184 / PCC 6803 / Kazusa).